A 437-amino-acid polypeptide reads, in one-letter code: Adenylyltransferase and sulfurtransferase MOCS3 (437 aa).

ATP-binding positions include Gly-82, Asp-103, 110 to 114, Lys-127, and 171 to 172; these read TNLHR and DN. Zn(2+)-binding residues include Cys-212 and Cys-215. Catalysis depends on Cys-229, which acts as the Glycyl thioester intermediate; for adenylyltransferase activity. Zn(2+) contacts are provided by Cys-287 and Cys-290. Residues 337 to 435 enclose the Rhodanese domain; that stretch reads SNVPHLLVDV…WTHNIDPEFP (99 aa). Cys-391 acts as the Cysteine persulfide intermediate; for sulfurtransferase activity in catalysis.

The protein in the N-terminal section; belongs to the HesA/MoeB/ThiF family. UBA4 subfamily. Zn(2+) serves as cofactor.

The protein localises to the cytoplasm. It localises to the cytosol. It carries out the reaction [molybdopterin-synthase sulfur-carrier protein]-C-terminal Gly-Gly + ATP + H(+) = [molybdopterin-synthase sulfur-carrier protein]-C-terminal Gly-Gly-AMP + diphosphate. The catalysed reaction is [molybdopterin-synthase sulfur-carrier protein]-C-terminal Gly-Gly-AMP + S-sulfanyl-L-cysteinyl-[cysteine desulfurase] + AH2 = [molybdopterin-synthase sulfur-carrier protein]-C-terminal-Gly-aminoethanethioate + L-cysteinyl-[cysteine desulfurase] + A + AMP + 2 H(+). It functions in the pathway tRNA modification; 5-methoxycarbonylmethyl-2-thiouridine-tRNA biosynthesis. The protein operates within cofactor biosynthesis; molybdopterin biosynthesis. In terms of biological role, plays a central role in 2-thiolation of mcm(5)S(2)U at tRNA wobble positions of cytosolic tRNA(Lys), tRNA(Glu) and tRNA(Gln). Also essential during biosynthesis of the molybdenum cofactor. Acts by mediating the C-terminal thiocarboxylation of sulfur carriers URM1 and MOCS2A. Its N-terminus first activates URM1 and MOCS2A as acyl-adenylates (-COAMP), then the persulfide sulfur on the catalytic cysteine is transferred to URM1 and MOCS2A to form thiocarboxylation (-COSH) of their C-terminus. The reaction probably involves hydrogen sulfide that is generated from the persulfide intermediate and that acts as a nucleophile towards URM1 and MOCS2A. Subsequently, a transient disulfide bond is formed. Does not use thiosulfate as sulfur donor; NFS1 probably acting as a sulfur donor for thiocarboxylation reactions. This Aedes aegypti (Yellowfever mosquito) protein is Adenylyltransferase and sulfurtransferase MOCS3.